The following is a 547-amino-acid chain: ATP synthase subunit alpha (547 aa).

ATP is bound at residue 172-179 (GDRKTGKT).

It belongs to the ATPase alpha/beta chains family. As to quaternary structure, F-type ATPases have 2 components, CF(1) - the catalytic core - and CF(0) - the membrane proton channel. CF(1) has five subunits: alpha(3), beta(3), gamma(1), delta(1), epsilon(1). CF(0) has three main subunits: a(1), b(2) and c(9-12). The alpha and beta chains form an alternating ring which encloses part of the gamma chain. CF(1) is attached to CF(0) by a central stalk formed by the gamma and epsilon chains, while a peripheral stalk is formed by the delta and b chains.

The protein localises to the cell membrane. The enzyme catalyses ATP + H2O + 4 H(+)(in) = ADP + phosphate + 5 H(+)(out). Its function is as follows. Produces ATP from ADP in the presence of a proton gradient across the membrane. The alpha chain is a regulatory subunit. The protein is ATP synthase subunit alpha of Rhodococcus opacus (strain B4).